The sequence spans 543 residues: Glucose-6-phosphate isomerase (543 aa).

Glu351 (proton donor) is an active-site residue. Active-site residues include His382 and Lys511.

This sequence belongs to the GPI family.

It localises to the cytoplasm. It catalyses the reaction alpha-D-glucose 6-phosphate = beta-D-fructose 6-phosphate. Its pathway is carbohydrate biosynthesis; gluconeogenesis. It functions in the pathway carbohydrate degradation; glycolysis; D-glyceraldehyde 3-phosphate and glycerone phosphate from D-glucose: step 2/4. Catalyzes the reversible isomerization of glucose-6-phosphate to fructose-6-phosphate. The sequence is that of Glucose-6-phosphate isomerase from Hydrogenovibrio crunogenus (strain DSM 25203 / XCL-2) (Thiomicrospira crunogena).